A 304-amino-acid chain; its full sequence is Aspartate carbamoyltransferase catalytic subunit (304 aa).

Carbamoyl phosphate-binding residues include Arg-49 and Thr-50. Residue Lys-77 coordinates L-aspartate. Carbamoyl phosphate is bound by residues Arg-99, His-127, and Gln-130. L-aspartate contacts are provided by Arg-160 and Arg-211. Carbamoyl phosphate contacts are provided by Ala-252 and Pro-253.

The protein belongs to the aspartate/ornithine carbamoyltransferase superfamily. ATCase family. Heterododecamer (2C3:3R2) of six catalytic PyrB chains organized as two trimers (C3), and six regulatory PyrI chains organized as three dimers (R2).

The enzyme catalyses carbamoyl phosphate + L-aspartate = N-carbamoyl-L-aspartate + phosphate + H(+). Its pathway is pyrimidine metabolism; UMP biosynthesis via de novo pathway; (S)-dihydroorotate from bicarbonate: step 2/3. Catalyzes the condensation of carbamoyl phosphate and aspartate to form carbamoyl aspartate and inorganic phosphate, the committed step in the de novo pyrimidine nucleotide biosynthesis pathway. In Bacillus cereus (strain G9842), this protein is Aspartate carbamoyltransferase catalytic subunit.